Consider the following 526-residue polypeptide: Peptide chain release factor 3 (526 aa).

Residues 9–277 enclose the tr-type G domain; that stretch reads DKRRTFAIIS…GIVEWAPKPL (269 aa). GTP is bound by residues 18–25, 86–90, and 140–143; these read SHPDAGKT, DTPGH, and NKCD.

This sequence belongs to the TRAFAC class translation factor GTPase superfamily. Classic translation factor GTPase family. PrfC subfamily.

The protein resides in the cytoplasm. Its function is as follows. Increases the formation of ribosomal termination complexes and stimulates activities of RF-1 and RF-2. It binds guanine nucleotides and has strong preference for UGA stop codons. It may interact directly with the ribosome. The stimulation of RF-1 and RF-2 is significantly reduced by GTP and GDP, but not by GMP. The protein is Peptide chain release factor 3 of Shewanella frigidimarina (strain NCIMB 400).